Consider the following 116-residue polypeptide: Alpha-amylase inhibitor 5 (116 aa).

5 disulfides stabilise this stretch: C4–C55, C18–C44, C27–C77, C45–C95, and C57–C106.

The protein belongs to the protease inhibitor I6 (cereal trypsin/alpha-amylase inhibitor) family.

It localises to the secreted. Functionally, alpha-amylase inhibitor. The sequence is that of Alpha-amylase inhibitor 5 from Sorghum bicolor (Sorghum).